The chain runs to 299 residues: Glycine--tRNA ligase alpha subunit (299 aa).

It belongs to the class-II aminoacyl-tRNA synthetase family. As to quaternary structure, tetramer of two alpha and two beta subunits.

It localises to the cytoplasm. It catalyses the reaction tRNA(Gly) + glycine + ATP = glycyl-tRNA(Gly) + AMP + diphosphate. The sequence is that of Glycine--tRNA ligase alpha subunit from Dictyoglomus thermophilum (strain ATCC 35947 / DSM 3960 / H-6-12).